The primary structure comprises 120 residues: Ribosome-binding factor A (120 aa).

Belongs to the RbfA family. As to quaternary structure, monomer. Binds 30S ribosomal subunits, but not 50S ribosomal subunits or 70S ribosomes.

The protein resides in the cytoplasm. Its function is as follows. One of several proteins that assist in the late maturation steps of the functional core of the 30S ribosomal subunit. Associates with free 30S ribosomal subunits (but not with 30S subunits that are part of 70S ribosomes or polysomes). Required for efficient processing of 16S rRNA. May interact with the 5'-terminal helix region of 16S rRNA. The protein is Ribosome-binding factor A of Lactobacillus delbrueckii subsp. bulgaricus (strain ATCC 11842 / DSM 20081 / BCRC 10696 / JCM 1002 / NBRC 13953 / NCIMB 11778 / NCTC 12712 / WDCM 00102 / Lb 14).